Reading from the N-terminus, the 128-residue chain is MTRIRRGNIARRRRTKIRLFASSFRGAHSRLTRTITQQKIRALVSSHRDRDKQKRNFRRLWITRINAVIREIGVSYSYSRLIHALYKKQVLLNRKILAQIAISNKNCLYMISNEIIKEVDWKESTGII.

It belongs to the bacterial ribosomal protein bL20 family.

Its subcellular location is the plastid. The protein resides in the chloroplast. Binds directly to 23S ribosomal RNA and is necessary for the in vitro assembly process of the 50S ribosomal subunit. It is not involved in the protein synthesizing functions of that subunit. This Daucus carota (Wild carrot) protein is Large ribosomal subunit protein bL20c.